Reading from the N-terminus, the 230-residue chain is RING finger protein 141 (230 aa).

Glycine 2 carries the N-myristoyl glycine lipid modification. An RING-type zinc finger spans residues 155–192 (CCICMDGRADLILPCAHSFCQKCIDKWSDRHRNCPICR).

Isoform 1 is testis-specific. Isoform 2 is expressed in heart, brain, skeletal muscle, kidney, pancreas, lung, liver and testis. Isoform 3 is expressed in heart, liver, and kidney.

The protein resides in the membrane. Its function is as follows. May be involved in spermatogenesis. In Mus musculus (Mouse), this protein is RING finger protein 141 (Rnf141).